Here is a 334-residue protein sequence, read N- to C-terminus: 7,8-didemethyl-8-hydroxy-5-deazariboflavin synthase (334 aa).

In terms of domain architecture, Radical SAM core spans 2–248 (VSYSKNVFVP…PDVPVQVPPN (247 aa)). Residues cysteine 16, cysteine 20, and cysteine 23 each contribute to the [4Fe-4S] cluster site.

The protein belongs to the radical SAM superfamily. CofG family. As to quaternary structure, consists of two subunits, CofG and CofH. [4Fe-4S] cluster is required as a cofactor.

It carries out the reaction 5-amino-5-(4-hydroxybenzyl)-6-(D-ribitylimino)-5,6-dihydrouracil + S-adenosyl-L-methionine = 7,8-didemethyl-8-hydroxy-5-deazariboflavin + 5'-deoxyadenosine + L-methionine + NH4(+) + H(+). The protein operates within cofactor biosynthesis; coenzyme F0 biosynthesis. Catalyzes the radical-mediated synthesis of 7,8-didemethyl-8-hydroxy-5-deazariboflavin from 5-amino-5-(4-hydroxybenzyl)-6-(D-ribitylimino)-5,6-dihydrouracil. The protein is 7,8-didemethyl-8-hydroxy-5-deazariboflavin synthase of Methanopyrus kandleri (strain AV19 / DSM 6324 / JCM 9639 / NBRC 100938).